Consider the following 75-residue polypeptide: Small ribosomal subunit protein bS18 (75 aa).

Belongs to the bacterial ribosomal protein bS18 family. In terms of assembly, part of the 30S ribosomal subunit. Forms a tight heterodimer with protein bS6.

Its function is as follows. Binds as a heterodimer with protein bS6 to the central domain of the 16S rRNA, where it helps stabilize the platform of the 30S subunit. This Thermotoga maritima (strain ATCC 43589 / DSM 3109 / JCM 10099 / NBRC 100826 / MSB8) protein is Small ribosomal subunit protein bS18.